The sequence spans 373 residues: 4-hydroxy-3-methylbut-2-en-1-yl diphosphate synthase (flavodoxin) (373 aa).

[4Fe-4S] cluster is bound by residues Cys268, Cys271, Cys303, and Glu310.

Belongs to the IspG family. [4Fe-4S] cluster serves as cofactor.

The catalysed reaction is (2E)-4-hydroxy-3-methylbut-2-enyl diphosphate + oxidized [flavodoxin] + H2O + 2 H(+) = 2-C-methyl-D-erythritol 2,4-cyclic diphosphate + reduced [flavodoxin]. It participates in isoprenoid biosynthesis; isopentenyl diphosphate biosynthesis via DXP pathway; isopentenyl diphosphate from 1-deoxy-D-xylulose 5-phosphate: step 5/6. In terms of biological role, converts 2C-methyl-D-erythritol 2,4-cyclodiphosphate (ME-2,4cPP) into 1-hydroxy-2-methyl-2-(E)-butenyl 4-diphosphate. This is 4-hydroxy-3-methylbut-2-en-1-yl diphosphate synthase (flavodoxin) from Exiguobacterium sp. (strain ATCC BAA-1283 / AT1b).